Consider the following 89-residue polypeptide: Endoribonuclease VapD 1 (89 aa).

Belongs to the VapD ribonuclease family. In terms of assembly, homodimer.

Cleaves ssRNA, mostly between U:A. The chain is Endoribonuclease VapD 1 from Riemerella anatipestifer (Moraxella anatipestifer).